Consider the following 353-residue polypeptide: Methionine import ATP-binding protein MetN (353 aa).

In terms of domain architecture, ABC transporter spans 8-249 (LDQIDVTFHQ…PKQPLTQDFI (242 aa)). 42 to 49 (GYSGAGKS) contacts ATP.

The protein belongs to the ABC transporter superfamily. Methionine importer (TC 3.A.1.24) family. As to quaternary structure, the complex is composed of two ATP-binding proteins (MetN), two transmembrane proteins (MetI) and a solute-binding protein (MetQ).

The protein localises to the cell membrane. It catalyses the reaction L-methionine(out) + ATP + H2O = L-methionine(in) + ADP + phosphate + H(+). It carries out the reaction D-methionine(out) + ATP + H2O = D-methionine(in) + ADP + phosphate + H(+). Functionally, part of the ABC transporter complex MetNIQ involved in methionine import. Responsible for energy coupling to the transport system. The sequence is that of Methionine import ATP-binding protein MetN from Streptococcus pneumoniae serotype 4 (strain ATCC BAA-334 / TIGR4).